The chain runs to 62 residues: uncharacterized protein (62 aa).

This is an uncharacterized protein from Saccharomyces cerevisiae (strain ATCC 204508 / S288c) (Baker's yeast).